The primary structure comprises 497 residues: Glutamyl-tRNA(Gln) amidotransferase subunit A (497 aa).

Active-site charge relay system residues include Lys91 and Ser166. The tract at residues 143–171 (SSTENSAYGPTHNPWDLERTAGGSGGGSS) is disordered. The Acyl-ester intermediate role is filled by Ser190.

Belongs to the amidase family. GatA subfamily. In terms of assembly, heterotrimer of A, B and C subunits.

It carries out the reaction L-glutamyl-tRNA(Gln) + L-glutamine + ATP + H2O = L-glutaminyl-tRNA(Gln) + L-glutamate + ADP + phosphate + H(+). Allows the formation of correctly charged Gln-tRNA(Gln) through the transamidation of misacylated Glu-tRNA(Gln) in organisms which lack glutaminyl-tRNA synthetase. The reaction takes place in the presence of glutamine and ATP through an activated gamma-phospho-Glu-tRNA(Gln). In Corynebacterium glutamicum (strain ATCC 13032 / DSM 20300 / JCM 1318 / BCRC 11384 / CCUG 27702 / LMG 3730 / NBRC 12168 / NCIMB 10025 / NRRL B-2784 / 534), this protein is Glutamyl-tRNA(Gln) amidotransferase subunit A.